The sequence spans 2357 residues: Protein transport protein Sec16A (2357 aa).

11 disordered regions span residues 1–225, 240–347, 394–463, 504–562, 579–630, 666–689, 714–739, 778–820, 917–1008, 1023–1055, and 1076–1151; these read MQPP…SYQH, QAAS…AHHP, SFSS…GTGT, YGPL…ARPQ, DTSG…TSAN, KRRA…DNME, TAGT…GPVK, SEVV…PPKV, VTGA…QEEA, PVRM…LHNQ, and QPEL…AAVR. Polar residues-rich tracts occupy residues 57–75 and 94–104; these read NRQT…SSLP and TPTNAGDSSTG. A compositionally biased stretch (low complexity) spans 208–221; sequence MPGQWGPAQGGPQP. Residues 281–290 show a composition bias toward polar residues; sequence VHQQSKNHPL. Ser311 is modified (phosphoserine). Residues 333–342 show a composition bias toward polar residues; sequence PFTQGNSPEN. Positions 540-561 are enriched in low complexity; sequence PDSVSSSYSSHSHRSPPGSARP. Residues Ser581, Ser591, Ser609, Ser611, and Ser614 each carry the phosphoserine modification. Residues 581–590 are compositionally biased toward polar residues; it reads SGSFFKQIDS. Position 615 is a phosphothreonine (Thr615). Ser617 carries the post-translational modification Phosphoserine. Polar residues-rich tracts occupy residues 921 to 959, 972 to 997, and 1029 to 1041; these read SLPS…QTPQ, FVSS…PNSN, and PSPS…QQPL. Residues 1037–1905 form a required for localization to endoplasmic reticulum exit sites region; sequence SQQPLPNHPR…QHVERQIQEG (869 aa). Ser1087 carries the phosphoserine modification. The interaction with MIA3 stretch occupies residues 1118-1415; the sequence is ASPASVNTGQ…EAPHAPGSFH (298 aa). The segment at 1119-1420 is required for endoplasmic reticulum localization; that stretch reads SPASVNTGQL…PGSFHGDYAY (302 aa). The segment covering 1134–1150 has biased composition (low complexity); sequence QASSASVTSTNSSQAAV. Ser1223 carries the post-translational modification Phosphoserine. The tract at residues 1226 to 1253 is disordered; sequence AENHRYSEPERPSSRASHYSDQLAPRQG. The span at 1227–1238 shows a compositional bias: basic and acidic residues; the sequence is ENHRYSEPERPS. Ser1245 bears the Phosphoserine mark. At Thr1340 the chain carries Phosphothreonine. Phosphoserine occurs at positions 1342, 1362, 1365, 1371, 1374, 1377, 1384, 1588, and 1616. A disordered region spans residues 1344 to 1395; sequence DDDAEIHRDPYGEEADRRSIHSEHSARSLRSTHSLPSRRSSLSSHSHQSQIY. Positions 1348–1369 are enriched in basic and acidic residues; the sequence is EIHRDPYGEEADRRSIHSEHSA. Positions 1371 to 1392 are enriched in low complexity; it reads SLRSTHSLPSRRSSLSSHSHQS. The tract at residues 1449-1905 is central conserved domain (CCD); mediates interaction with RNF183, LRRK2 and SEC13; the sequence is QVPSRPTSPE…QHVERQIQEG (457 aa). The interval 1907–1943 is disordered; it reads VLWSQDGTEPQQCRITSGSEVEQSDGPGLNQQAGPQA. Over residues 1908 to 1927 the composition is skewed to polar residues; sequence LWSQDGTEPQQCRITSGSEV. The residue at position 1922 (Thr1922) is a Phosphothreonine. Phosphoserine is present on residues Ser1951, Ser2043, Ser2063, Ser2077, and Ser2094. Disordered regions lie at residues 1993-2141, 2156-2198, and 2240-2357; these read ELSP…RTEA, KKNQ…PTAS, and PLPI…AALN. Residues 2092-2105 show a composition bias toward polar residues; it reads GSSSLTRAPSLTSD. Over residues 2106 to 2126 the composition is skewed to basic and acidic residues; sequence SEGKKPAQAVKKEPKEPKKTE. Residues 2126 to 2357 are required for interaction with SEC23A; the sequence is ESWFSRWLPG…IGQRKYAALN (232 aa). Ser2291 carries the phosphoserine modification. Residues 2332–2343 are compositionally biased toward polar residues; it reads QLVQASVTSGNS.

The protein belongs to the SEC16 family. In terms of assembly, SEC16A and SEC16B are each present in multiple copies in a heteromeric complex. Interacts with SEC23A. Interacts with RNF183, RNF152, MIA3 and SEC13. Interacts with GORASP2 in response to ER stress. Interacts with LRRK2 (via ROC domain). Interacts with RAB10.

It localises to the endoplasmic reticulum membrane. The protein resides in the golgi apparatus membrane. The protein localises to the cytoplasm. Its subcellular location is the perinuclear region. It is found in the cytosol. It localises to the microsome membrane. In terms of biological role, acts as a molecular scaffold that plays a key role in the organization of the endoplasmic reticulum exit sites (ERES), also known as transitional endoplasmic reticulum (tER). SAR1A-GTP-dependent assembly of SEC16A on the ER membrane forms an organized scaffold defining an ERES. Required for secretory cargo traffic from the endoplasmic reticulum to the Golgi apparatus. Mediates the recruitment of MIA3/TANGO to ERES. Regulates both conventional (ER/Golgi-dependent) and GORASP2-mediated unconventional (ER/Golgi-independent) trafficking of CFTR to cell membrane. Acts as a RAB10 effector in the regulation of insulin-induced SLC2A4/GLUT4 glucose transporter-enriched vesicles delivery to the plasma membrane in adipocytes. The polypeptide is Protein transport protein Sec16A (Sec16a) (Mus musculus (Mouse)).